Here is a 317-residue protein sequence, read N- to C-terminus: Cytochrome f (317 aa).

An N-terminal signal peptide occupies residues 1 to 34 (MINFKKQIMKKTTFFLCAMLLVSSILIAPRSSLA). Heme is bound by residues Tyr35, Cys55, Cys58, and His59. The helical transmembrane segment at 284–304 (IIGLIAFFIGVGLTQILLVLK) threads the bilayer.

The protein belongs to the cytochrome f family. As to quaternary structure, the 4 large subunits of the cytochrome b6-f complex are cytochrome b6, subunit IV (17 kDa polypeptide, PetD), cytochrome f and the Rieske protein, while the 4 small subunits are PetG, PetL, PetM and PetN. The complex functions as a dimer. It depends on heme as a cofactor.

The protein localises to the cellular thylakoid membrane. Its function is as follows. Component of the cytochrome b6-f complex, which mediates electron transfer between photosystem II (PSII) and photosystem I (PSI), cyclic electron flow around PSI, and state transitions. This is Cytochrome f from Prochlorococcus marinus (strain MIT 9515).